Reading from the N-terminus, the 199-residue chain is Ribosome maturation factor RimM (199 aa).

Positions 100-195 constitute a PRC barrel domain; sequence ADEWYPKDLI…YLTLDPPGGL (96 aa).

Belongs to the RimM family. Binds ribosomal protein uS19.

The protein resides in the cytoplasm. An accessory protein needed during the final step in the assembly of 30S ribosomal subunit, possibly for assembly of the head region. Essential for efficient processing of 16S rRNA. May be needed both before and after RbfA during the maturation of 16S rRNA. It has affinity for free ribosomal 30S subunits but not for 70S ribosomes. The protein is Ribosome maturation factor RimM of Bifidobacterium longum (strain DJO10A).